The chain runs to 231 residues: Large ribosomal subunit protein uL1 (231 aa).

This sequence belongs to the universal ribosomal protein uL1 family. As to quaternary structure, part of the 50S ribosomal subunit.

Its function is as follows. Binds directly to 23S rRNA. The L1 stalk is quite mobile in the ribosome, and is involved in E site tRNA release. Protein L1 is also a translational repressor protein, it controls the translation of the L11 operon by binding to its mRNA. The polypeptide is Large ribosomal subunit protein uL1 (Ruthia magnifica subsp. Calyptogena magnifica).